Here is a 758-residue protein sequence, read N- to C-terminus: EMILIN-3 (758 aa).

The N-terminal stretch at 1–21 (MGRRLSVWLCTVAALLSGAQA) is a signal peptide. Residues 54 to 130 (HKSLCAYVVH…PGLTGESCPE (77 aa)) enclose the EMI domain. 3 cysteine pairs are disulfide-bonded: C58-C120, C85-C91, and C119-C128. N-linked (GlcNAc...) asparagine glycosylation occurs at N65. Positions 131-178 (HLTDHGATPPHQEPEPQIPLGQLGPGPRPSPYSREAPRPRGRKGQGPF) are disordered. Residues 379 to 401 (SQLALISARVDSLERNLQAVTET) are a coiled coil. N436 carries an N-linked (GlcNAc...) asparagine glycan. Coiled-coil stretches lie at residues 460 to 483 (GSTL…ELSP) and 528 to 567 (AEVK…QLAE). N-linked (GlcNAc...) asparagine glycans are attached at residues N555 and N609. 2 coiled-coil regions span residues 642 to 677 (RQVL…ELQH) and 720 to 753 (HIDK…AEVR). N725 carries N-linked (GlcNAc...) asparagine glycosylation.

It is found in the secreted. The protein localises to the extracellular space. The protein resides in the extracellular matrix. It localises to the cytoplasm. The polypeptide is EMILIN-3 (Emilin3) (Mus musculus (Mouse)).